We begin with the raw amino-acid sequence, 257 residues long: Geranylgeranylglyceryl phosphate synthase (257 aa).

Mg(2+) contacts are provided by D27 and T57. Sn-glycerol 1-phosphate-binding positions include Y175 to G181, G207 to G208, and G229 to N230.

It belongs to the GGGP/HepGP synthase family. Group II subfamily. The cofactor is Mg(2+).

The protein resides in the cytoplasm. The catalysed reaction is sn-glycerol 1-phosphate + (2E,6E,10E)-geranylgeranyl diphosphate = sn-3-O-(geranylgeranyl)glycerol 1-phosphate + diphosphate. Its pathway is membrane lipid metabolism; glycerophospholipid metabolism. In terms of biological role, prenyltransferase that catalyzes the transfer of the geranylgeranyl moiety of geranylgeranyl diphosphate (GGPP) to the C3 hydroxyl of sn-glycerol-1-phosphate (G1P). This reaction is the first ether-bond-formation step in the biosynthesis of archaeal membrane lipids. This is Geranylgeranylglyceryl phosphate synthase from Sulfolobus acidocaldarius (strain ATCC 33909 / DSM 639 / JCM 8929 / NBRC 15157 / NCIMB 11770).